A 382-amino-acid polypeptide reads, in one-letter code: Alkane 1-monooxygenase 1 (382 aa).

Helical transmembrane passes span 10 to 30 (MLAI…SMPF), 43 to 63 (FWAF…DMLF), 90 to 110 (LATV…FVAF), and 121 to 141 (WILS…HELI). The Fe cation site is built by His138 and His142. The helical transmembrane segment at 146-166 (ALEQAAGGILLAAVCYAGFKV) threads the bilayer. 3 residues coordinate Fe cation: His168, His172, and His173. The chain crosses the membrane as a helical span at residues 236–256 (LALLVGFGWAFGWLGMVFFLG). The Fe cation site is built by His312, His315, and His316.

This sequence belongs to the fatty acid desaturase type 1 family. AlkB subfamily. Fe(3+) is required as a cofactor.

The protein localises to the cell inner membrane. The enzyme catalyses octane + 2 reduced [rubredoxin] + O2 + 2 H(+) = 2 oxidized [rubredoxin] + octan-1-ol + H2O. It participates in hydrocarbon metabolism; alkane degradation. Catalyzes the hydroxylation of n-alkanes in the presence of a NADH-rubredoxin reductase and rubredoxin. It preferably hydroxylases C16-C24 hydrocarbons. The polypeptide is Alkane 1-monooxygenase 1 (alkB1) (Pseudomonas aeruginosa (strain ATCC 15692 / DSM 22644 / CIP 104116 / JCM 14847 / LMG 12228 / 1C / PRS 101 / PAO1)).